The primary structure comprises 123 residues: Small ribosomal subunit protein bS16 (123 aa).

The segment at 79–123 (AGIAKRPSRNNPTKGEPGKKAQERLALAKQAEEEAAAKAAEAASE) is disordered.

Belongs to the bacterial ribosomal protein bS16 family.

This is Small ribosomal subunit protein bS16 from Brucella melitensis biotype 2 (strain ATCC 23457).